The following is a 1116-amino-acid chain: cGMP-specific 3',5'-cyclic phosphodiesterase (1116 aa).

Disordered regions lie at residues 1–36 (MTDVSATTGRAGDRVSSTSSEVAVETTSQALTNGAA) and 82–136 (KSEC…ATQQ). The span at 15–28 (VSSTSSEVAVETTS) shows a compositional bias: low complexity. A compositionally biased stretch (polar residues) spans 86 to 136 (HSQSNNNQHVETAPSKQSSDSEASAPTTVSIPSANAKINSSSSGKTTATQQ). GAF domains lie at 241–393 (DIDV…GIGI) and 425–611 (NLEC…GLGI). Residues 641-964 (SQDQTEKLAQ…RNWQDLAEKV (324 aa)) form the PDEase domain. The Proton donor role is filled by His717. The a divalent metal cation site is built by His721, His757, Asp758, and Asp868. Disordered regions lie at residues 1005 to 1031 (QHGGSAGGGEDTHTPEHQRSSSRLSIK) and 1067 to 1116 (HVSE…CALL). Basic and acidic residues-rich tracts occupy residues 1014 to 1023 (EDTHTPEHQR) and 1067 to 1076 (HVSEDMDDKS). Residues 1085 to 1103 (SGSVGRMSASSSTSSAGTV) show a composition bias toward low complexity. Positions 1106 to 1116 (SKKRSKLCALL) are enriched in basic residues. Cys1113 is modified (cysteine methyl ester). Cys1113 carries S-farnesyl cysteine lipidation. The propeptide at 1114-1116 (ALL) is removed in mature form.

This sequence belongs to the cyclic nucleotide phosphodiesterase family. As to quaternary structure, interacts with PrBP. Requires a divalent metal cation as cofactor.

The protein localises to the cell membrane. It carries out the reaction 3',5'-cyclic GMP + H2O = GMP + H(+). Functionally, has a role regulating cGMP transport in Malpighian tubule principal cells. This Drosophila mojavensis (Fruit fly) protein is cGMP-specific 3',5'-cyclic phosphodiesterase.